The following is a 396-amino-acid chain: Probable circularly permuted 1,3-beta-glucanase YJL171C (396 aa).

A signal peptide spans Met1–Ala19. 7 N-linked (GlcNAc...) asparagine glycosylation sites follow: Asn51, Asn99, Asn122, Asn146, Asn174, Asn219, and Asn249. Positions Glu259–Glu264 match the ExDxxE motif motif. N-linked (GlcNAc...) asparagine glycosylation is found at Asn267, Asn300, Asn328, and Asn346. Residue Asn368 is the site of GPI-anchor amidated asparagine attachment. Residues Gly369–Ile396 constitute a propeptide, removed in mature form.

It belongs to the PGA52 family. Extensively N-glycosylated.

The protein localises to the cell membrane. The catalysed reaction is Hydrolysis of (1-&gt;3)-beta-D-glucosidic linkages in (1-&gt;3)-beta-D-glucans.. Its function is as follows. Probable circularly permuted 1,3-beta-glucanase involved in cell wall modification through beta-1,3-glucan network alterations such as increased branching or remodeling. This chain is Probable circularly permuted 1,3-beta-glucanase YJL171C (TOH1), found in Saccharomyces cerevisiae (strain ATCC 204508 / S288c) (Baker's yeast).